A 295-amino-acid chain; its full sequence is Nucleotide-binding protein CMS1991 (295 aa).

Residue 19–26 coordinates ATP; the sequence is GMSGAGRS. Residue 70 to 73 participates in GTP binding; the sequence is DVRG.

It belongs to the RapZ-like family.

In terms of biological role, displays ATPase and GTPase activities. The protein is Nucleotide-binding protein CMS1991 of Clavibacter sepedonicus (Clavibacter michiganensis subsp. sepedonicus).